Consider the following 493-residue polypeptide: Vinyl phenol reductase (493 aa).

9 residues coordinate FAD: alanine 19, glutamate 38, serine 46, threonine 50, glycine 52, alanine 156, aspartate 224, asparagine 448, and valine 467.

Belongs to the FAD-dependent oxidoreductase 2 family. FRD/SDH subfamily. The cofactor is FAD.

The enzyme catalyses 4-vinylphenol + NADH + H(+) = 4-ethylphenol + NAD(+). The catalysed reaction is 3,4-dihydroxystyrene + NADH + H(+) = 4-ethylcatechol + NAD(+). It catalyses the reaction 2-methoxy-4-vinylphenol + NADH + H(+) = 4-ethyl-2-methoxyphenol + NAD(+). Functionally, involved in the production of ethylphenols during the degradation of hydroxycinnamic acids. Catalyzes the reduction of vinylphenols (4-vinylphenol (4-hydroxystyrene), 4-vinylcatechol (3,4-dihydroxystyrene), and 4-vinylguaiacol (2-methoxy-4-vinylphenol)) to their corresponding ethylphenols (4-ethylphenol, 4-ethylcatechol, and 4-ethylguaiacol, respectively) in the presence of NADH. These compounds are considered the most important flavor components of fermented soy sauce, and, on the other hand, are considered off flavor and responsible for sensorial wine and cider alteration. The 4-ethylphenol produced by the gut bacteria L.plantarum strain WCFS1 can get subsequent sulfation to 4-ethylphenyl sulfate (4EPS) by host sulfotransferase (SULT1A1); 4EPS can enter the brain and seems to alter brain activity. Therefore, this enzyme likely plays a role in gut microbiota-host metabolic interactions. The polypeptide is Vinyl phenol reductase (Lactiplantibacillus plantarum (strain ATCC BAA-793 / NCIMB 8826 / WCFS1) (Lactobacillus plantarum)).